The chain runs to 211 residues: uncharacterized protein (211 aa).

The tract at residues 1–43 (MRPEVGREPAALQPRQRPRSDHQLHRSPFTVPPRTPACRSPGP) is disordered.

This is an uncharacterized protein from Homo sapiens (Human).